The sequence spans 2290 residues: Armadillo repeat-containing X-linked protein 4 (2290 aa).

Residues 7 to 24 (VGWVTAGLVIWAGTCYYI) form a helical membrane-spanning segment. 8 disordered regions span residues 517–549 (QGEA…TCTQ), 564–583 (SRVD…TKAD), 967–988 (KVRG…VGSA), 1014–1087 (AVPK…ACRK), 1302–1430 (GSWA…ANSG), 1521–1715 (GSWG…RSED), 1911–1931 (SNTF…AGDN), and 1954–1973 (NENT…KSSE). Basic residues predominate over residues 526-536 (GKARGKAKAKC). Over residues 1073 to 1087 (TSESEGGSGTQACRK) the composition is skewed to polar residues. Composition is skewed to gly residues over residues 1328–1341 (SWAG…GGSM) and 1403–1414 (AGAGGQAGGGSK). Positions 1419-1430 (DQSSGRSWANSG) are enriched in polar residues. Residues 1521–1535 (GSWGGASGQDVGGSR) are compositionally biased toward gly residues. Polar residues predominate over residues 1537-1558 (GPTNQSSAGSWDSPGSQVSGSC). Gly residues-rich tracts occupy residues 1581-1598 (IGGG…GGSR) and 1609-1623 (GSWG…GGAR). Over residues 1628-1645 (DQSSGGSWAGTGNQSSGR) the composition is skewed to polar residues. The segment covering 1674–1687 (GAGSQASGESWAGS) has biased composition (low complexity). ARM repeat units lie at residues 2031-2071 (RCKH…NSAD), 2073-2112 (SYSH…NISV), 2153-2192 (ITSE…NFSK), and 2194-2234 (PSMT…NINY).

The protein belongs to the eutherian X-chromosome-specific Armcx family.

The protein localises to the membrane. The chain is Armadillo repeat-containing X-linked protein 4 (ARMCX4) from Homo sapiens (Human).